The sequence spans 333 residues: Autoinducer 2 import system permease protein LsrD (333 aa).

Transmembrane regions (helical) follow at residues 7-27 (YGWE…FGIA), 45-65 (ICIG…GIDI), 70-90 (TIGL…PMAA), 91-111 (AIPL…ALIL), 118-138 (LVIT…LSGI), 162-182 (LFGL…CWLF), 212-232 (TLYL…IVLV), 240-260 (SDLG…GGAN), 261-281 (IYGG…IGYL), and 288-308 (AGVP…IAVV).

This sequence belongs to the binding-protein-dependent transport system permease family. AraH/RbsC subfamily. The complex is composed of two ATP-binding proteins (LsrA), two transmembrane proteins (LsrC and LsrD) and a solute-binding protein (LsrB).

The protein localises to the cell inner membrane. In terms of biological role, part of the ABC transporter complex LsrABCD involved in autoinducer 2 (AI-2) import. Probably responsible for the translocation of the substrate across the membrane. This chain is Autoinducer 2 import system permease protein LsrD (lsrD), found in Photorhabdus laumondii subsp. laumondii (strain DSM 15139 / CIP 105565 / TT01) (Photorhabdus luminescens subsp. laumondii).